Reading from the N-terminus, the 151-residue chain is S-ribosylhomocysteine lyase (151 aa).

The Fe cation site is built by His54, His58, and Cys121.

Belongs to the LuxS family. As to quaternary structure, homodimer. Requires Fe cation as cofactor.

The enzyme catalyses S-(5-deoxy-D-ribos-5-yl)-L-homocysteine = (S)-4,5-dihydroxypentane-2,3-dione + L-homocysteine. In terms of biological role, involved in the synthesis of autoinducer 2 (AI-2) which is secreted by bacteria and is used to communicate both the cell density and the metabolic potential of the environment. The regulation of gene expression in response to changes in cell density is called quorum sensing. Catalyzes the transformation of S-ribosylhomocysteine (RHC) to homocysteine (HC) and 4,5-dihydroxy-2,3-pentadione (DPD). This Clostridium botulinum (strain Alaska E43 / Type E3) protein is S-ribosylhomocysteine lyase.